The following is a 321-amino-acid chain: Olfactory receptor 5K4 (321 aa).

Topologically, residues 1-25 (MARENHSLAAEFILIGFTNYPELKT) are extracellular. Residue Asn-5 is glycosylated (N-linked (GlcNAc...) asparagine). The chain crosses the membrane as a helical span at residues 26–46 (LLFVVFSAIYLVTMVGNLGLV). Over 47-54 (ALIYVERR) the chain is Cytoplasmic. The chain crosses the membrane as a helical span at residues 55–75 (LLTPMYIFLGNLALMDSCCSC). At 76–97 (AVTPKMLENFFSEDRIISLYEC) the chain is on the extracellular side. The cysteines at positions 97 and 179 are disulfide-linked. The helical transmembrane segment at 98–118 (MAQFYFLCLAETTDCFLLATM) threads the bilayer. Residues 119–139 (AYDRYVAICHPLQYHTMMSKT) lie on the Cytoplasmic side of the membrane. A helical transmembrane segment spans residues 140–160 (LCIRMTTGAFKAGNLHSMIHV). The Extracellular portion of the chain corresponds to 161–205 (GLLLRLTFCRSNKIHHFFCDILPLYRLSCTDPSINELMIYIFSIP). A helical transmembrane segment spans residues 206-226 (IQIFTIATVLISYLCILLTVF). Over 227–240 (KMKSKEGRGKAFST) the chain is Cytoplasmic. The chain crosses the membrane as a helical span at residues 241 to 261 (CASHFLSVSIFYICLLMYIGP). Residues 262-268 (SEEGDKD) are Extracellular-facing. A helical membrane pass occupies residues 269–289 (TPVAIFYAIVIPLLNPFIYSL). At 290–321 (RNKEVINVLKKIMRNYNILKQTCSIANLFLIY) the chain is on the cytoplasmic side.

This sequence belongs to the G-protein coupled receptor 1 family.

Its subcellular location is the cell membrane. Its function is as follows. Odorant receptor. This is Olfactory receptor 5K4 (OR5K4) from Homo sapiens (Human).